The chain runs to 132 residues: Small ribosomal subunit protein eS24 (132 aa).

Over residues 90-100 (RLARHGLFEKK) the composition is skewed to basic and acidic residues. The interval 90–132 (RLARHGLFEKKKTSRKQRKERKNRMKKVRGTKKASVGASKKKD) is disordered. A compositionally biased stretch (basic residues) spans 101–121 (KTSRKQRKERKNRMKKVRGTK).

It belongs to the eukaryotic ribosomal protein eS24 family. As to quaternary structure, component of the small ribosomal subunit.

The protein localises to the cytoplasm. Its function is as follows. Component of the small ribosomal subunit. The ribosome is a large ribonucleoprotein complex responsible for the synthesis of proteins in the cell. Required for processing of pre-rRNA and maturation of 40S ribosomal subunits. This Takifugu rubripes (Japanese pufferfish) protein is Small ribosomal subunit protein eS24 (rps24).